The chain runs to 82 residues: Large ribosomal subunit protein bL31B-2 (82 aa).

The protein belongs to the bacterial ribosomal protein bL31 family. Type B subfamily. In terms of assembly, part of the 50S ribosomal subunit.

The protein is Large ribosomal subunit protein bL31B-2 of Streptomyces avermitilis (strain ATCC 31267 / DSM 46492 / JCM 5070 / NBRC 14893 / NCIMB 12804 / NRRL 8165 / MA-4680).